Reading from the N-terminus, the 259-residue chain is 5'-nucleotidase SurE (259 aa).

The a divalent metal cation site is built by aspartate 13, aspartate 14, serine 44, and asparagine 100.

Belongs to the SurE nucleotidase family. It depends on a divalent metal cation as a cofactor.

It localises to the cytoplasm. It catalyses the reaction a ribonucleoside 5'-phosphate + H2O = a ribonucleoside + phosphate. Its function is as follows. Nucleotidase that shows phosphatase activity on nucleoside 5'-monophosphates. The chain is 5'-nucleotidase SurE from Bacteroides thetaiotaomicron (strain ATCC 29148 / DSM 2079 / JCM 5827 / CCUG 10774 / NCTC 10582 / VPI-5482 / E50).